The sequence spans 109 residues: Aquaporin-2 (109 aa).

Over 1–6 (SVAFSR) the chain is Cytoplasmic. A helical membrane pass occupies residues 7-27 (AVFAEFLATLLFVFFGLGSAL). The Extracellular segment spans residues 28-35 (NWPQALPS). The helical transmembrane segment at 36–54 (VLQIAMAFGLGIGTLVQAL) threads the bilayer. Residues 55-59 (GHVSG) lie on the Cytoplasmic side of the membrane. Positions 60-69 (AHINPAVTVA) form an intramembrane region, discontinuously helical. An NPA 1 motif is present at residues 63–65 (NPA). Topologically, residues 70–80 (CLVGCHVSFLR) are cytoplasmic. A helical membrane pass occupies residues 81–102 (AAFYVAAQLLGAVAGAALLHEI). At 103 to 109 (TPPHVRG) the chain is on the extracellular side.

The protein belongs to the MIP/aquaporin (TC 1.A.8) family. In terms of assembly, homotetramer. Post-translationally, serine phosphorylation is necessary and sufficient for expression at the apical membrane. Endocytosis is not phosphorylation-dependent. N-glycosylated.

It localises to the apical cell membrane. The protein localises to the basolateral cell membrane. The protein resides in the cell membrane. Its subcellular location is the cytoplasmic vesicle membrane. It is found in the golgi apparatus. It localises to the trans-Golgi network membrane. It catalyses the reaction H2O(in) = H2O(out). It carries out the reaction glycerol(in) = glycerol(out). Its function is as follows. Forms a water-specific channel that provides the plasma membranes of renal collecting duct with high permeability to water, thereby permitting water to move in the direction of an osmotic gradient. Plays an essential role in renal water homeostasis. Could also be permeable to glycerol. The sequence is that of Aquaporin-2 from Canis lupus familiaris (Dog).